The primary structure comprises 102 residues: uncharacterized protein (102 aa).

The tract at residues 79–102 (AELLHPSPAPMPPATHGRSAAPCS) is disordered.

This is an uncharacterized protein from Homo sapiens (Human).